Reading from the N-terminus, the 1305-residue chain is Myosin-IIIb (1305 aa).

Residues 15 to 281 (WEIIETIGKG…VTHLLDHPFI (267 aa)) form the Protein kinase domain. ATP contacts are provided by residues 21–29 (IGKGTYGKV) and Lys44. Asp144 serves as the catalytic Proton acceptor. Residues 331–1046 (CLEDDLVNLE…HVEQLNLLLR (716 aa)) enclose the Myosin motor domain. Residues 927–949 (LMDLLSKMVVGQPHFIRCIKPND) form an actin-binding region. IQ domains are found at residues 1048–1077 (VMGRVVMLQAYTKGWLGARRYKRAKEKREK) and 1075–1104 (REKGAITIQSAWRGYDARRKLKQRSRRRSE). Disordered stretches follow at residues 1093-1164 (RKLK…VTSG) and 1200-1233 (SPCEDSLKPGSEEGLSQKQRAPRRRCQQPKMLSS).

In the C-terminal section; belongs to the TRAFAC class myosin-kinesin ATPase superfamily. Myosin family. The protein in the N-terminal section; belongs to the protein kinase superfamily. STE Ser/Thr protein kinase family. In terms of assembly, interacts (via C-terminus) with ESPN. Interacts (via C-terminus) with ESPNL. Expressed in the cochlear hair cells (at protein level). Expressed in utricle hair bundles (at protein level).

The protein localises to the cytoplasm. The protein resides in the cytoskeleton. It localises to the cell projection. Its subcellular location is the stereocilium. The enzyme catalyses L-seryl-[protein] + ATP = O-phospho-L-seryl-[protein] + ADP + H(+). It catalyses the reaction L-threonyl-[protein] + ATP = O-phospho-L-threonyl-[protein] + ADP + H(+). Functionally, probable actin-based motor with a protein kinase activity. Required for normal cochlear hair bundle development and hearing. Plays an important role in the early steps of cochlear hair bundle morphogenesis. Influences the number and lengths of stereocilia to be produced and limits the growth of microvilli within the forming auditory hair bundles thereby contributing to the architecture of the hair bundle, including its staircase pattern. Involved in the elongation of actin in stereocilia tips by transporting the actin regulatory factor ESPN to the plus ends of actin filaments. The protein is Myosin-IIIb (Myo3b) of Mus musculus (Mouse).